Here is a 371-residue protein sequence, read N- to C-terminus: MPARPTPPAVPLALALAAALAAPAPAAAARVKELADVVGVRENALYGYGLVVGLAGTGDSERVLFTQQSVAGMLGRLGIRIDPKDVRSRNVAAVMVTARLPPFARPGTRIDVAVASMGNARSLAGGLLLVTPLSGGDGKVYAVGQGPVQVAGYDAGAGGAELRKNTPTSGRVAGGATVERAVDFALGQAPLVLALRRPDLTTASRVAAAVNAKLGAGTARAVDPAAVELSPPPARKDDAVGFLAEVELLEVEADQRARVVVSERTGTVVAGDGVRLRPVAVAHGGLQVRVQRDPAVSQPAPFGAGRTVEATRDRAAAAEGAGGVVALPAAASVKDLARALDLLGATPRDLVAVLEAIRAAGALDADLEVLE.

A signal peptide spans 1–28 (MPARPTPPAVPLALALAAALAAPAPAAA).

It belongs to the FlgI family. In terms of assembly, the basal body constitutes a major portion of the flagellar organelle and consists of four rings (L,P,S, and M) mounted on a central rod.

The protein resides in the periplasm. It localises to the bacterial flagellum basal body. Its function is as follows. Assembles around the rod to form the L-ring and probably protects the motor/basal body from shearing forces during rotation. This Anaeromyxobacter dehalogenans (strain 2CP-C) protein is Flagellar P-ring protein.